Reading from the N-terminus, the 320-residue chain is Probable cell division protein WhiA (320 aa).

Residues 276–310 (TLKELGELVSGGKISKSGINHRLRKIDEIAERLRA) constitute a DNA-binding region (H-T-H motif).

This sequence belongs to the WhiA family.

Its function is as follows. Involved in cell division and chromosome segregation. This Geobacillus sp. (strain WCH70) protein is Probable cell division protein WhiA.